A 374-amino-acid chain; its full sequence is Anhydro-N-acetylmuramic acid kinase (374 aa).

Residue 12-19 participates in ATP binding; that stretch reads GTSLDGID.

It belongs to the anhydro-N-acetylmuramic acid kinase family.

The enzyme catalyses 1,6-anhydro-N-acetyl-beta-muramate + ATP + H2O = N-acetyl-D-muramate 6-phosphate + ADP + H(+). It participates in amino-sugar metabolism; 1,6-anhydro-N-acetylmuramate degradation. It functions in the pathway cell wall biogenesis; peptidoglycan recycling. Catalyzes the specific phosphorylation of 1,6-anhydro-N-acetylmuramic acid (anhMurNAc) with the simultaneous cleavage of the 1,6-anhydro ring, generating MurNAc-6-P. Is required for the utilization of anhMurNAc either imported from the medium or derived from its own cell wall murein, and thus plays a role in cell wall recycling. This is Anhydro-N-acetylmuramic acid kinase from Sodalis glossinidius (strain morsitans).